The following is a 264-amino-acid chain: Small ribosomal subunit protein eS1B (264 aa).

A compositionally biased stretch (basic residues) spans 1-19 (MALGKNKRISKGGKRGKRG). Residues 1–23 (MALGKNKRISKGGKRGKRGKAQE) are disordered.

Belongs to the eukaryotic ribosomal protein eS1 family. In terms of assembly, component of the small ribosomal subunit. Mature ribosomes consist of a small (40S) and a large (60S) subunit. The 40S subunit contains about 33 different proteins and 1 molecule of RNA (18S). The 60S subunit contains about 49 different proteins and 3 molecules of RNA (25S, 5.8S and 5S).

The protein resides in the cytoplasm. The chain is Small ribosomal subunit protein eS1B from Leishmania infantum.